Reading from the N-terminus, the 220-residue chain is UPF0319 protein YccT (220 aa).

Positions 1–20 are cleaved as a signal peptide; that stretch reads MKTGALATFLALCLPVTVFA.

It belongs to the UPF0319 family.

The polypeptide is UPF0319 protein YccT (Salmonella enteritidis PT4 (strain P125109)).